We begin with the raw amino-acid sequence, 524 residues long: Tyrosine-protein kinase HCK (524 aa).

Disordered stretches follow at residues 1-20 (MGGR…GRVP) and 35-71 (KASK…LPPG). Gly-2 carries the N-myristoyl glycine lipid modification. Residue Gly-3 is the site of S-palmitoyl cysteine attachment. Tyr-50 bears the Phosphotyrosine; by autocatalysis mark. Residues 76 to 136 (SEDTIVVALY…PSNYVARVNS (61 aa)) enclose the SH3 domain. Positions 142-239 (WFFKGISRKD…GLCQKLSVPC (98 aa)) constitute an SH2 domain. A Phosphothreonine modification is found at Thr-200. Residue Tyr-207 is modified to Phosphotyrosine. The Protein kinase domain occupies 260 to 513 (LQMEKKLGAG…YIQSVLDDFY (254 aa)). ATP-binding positions include 266 to 274 (LGAGQFGEV) and Lys-288. Asp-379 functions as the Proton acceptor in the catalytic mechanism. A Phosphotyrosine; by autocatalysis modification is found at Tyr-409. Ser-460 carries the phosphoserine modification. The residue at position 520 (Tyr-520) is a Phosphotyrosine.

This sequence belongs to the protein kinase superfamily. Tyr protein kinase family. SRC subfamily. Interacts with ADAM15. Interacts with FASLG. Interacts with ARRB1 and ARRB2. Interacts with FCGR1A; the interaction may be indirect. Interacts with IL6ST. Interacts (via SH3 domain) with ELMO1. Interacts (via SH3 domain) with TP73. Interacts with YAP1. Interacts with ABL1 and ITGB1, and thereby recruits ABL1 to activated ITGB1. Interacts (via SH2 domain) with FLT3 (tyrosine phosphorylated). Interacts with CBL. Interacts with VAV1, WAS and RAPGEF1. Interacts (via SH3 domain) with WDCP. Post-translationally, phosphorylated on several tyrosine residues. Autophosphorylated. Becomes rapidly phosphorylated upon activation of the immunoglobulin receptors FCGR1A and FCGR2A. Phosphorylation at Tyr-409 increases kinase activity. Phosphorylation at Tyr-520 inhibits kinase activity. Kinase activity is not required for phosphorylation at Tyr-520, suggesting that this site may be a target of other kinases. Ubiquitinated by CBL, leading to its degradation via the proteasome. In terms of processing, isoform 2 palmitoylation at position 2 requires prior myristoylation. Palmitoylation at position 3 is required for caveolar localization of isoform 2. In terms of tissue distribution, expressed strongly in spleen and at very low levels in thymus.

It localises to the cytoplasmic vesicle. The protein localises to the secretory vesicle. The protein resides in the cytoplasm. Its subcellular location is the cytosol. It is found in the membrane. It localises to the caveola. The protein localises to the lysosome. The protein resides in the cell projection. Its subcellular location is the podosome membrane. It is found in the cell membrane. It localises to the cell junction. The protein localises to the focal adhesion. The protein resides in the cytoskeleton. Its subcellular location is the golgi apparatus. It is found in the nucleus. It carries out the reaction L-tyrosyl-[protein] + ATP = O-phospho-L-tyrosyl-[protein] + ADP + H(+). With respect to regulation, subject to autoinhibition, mediated by intramolecular interactions involving the SH2 and SH3 domains. Kinase activity is also regulated by phosphorylation at regulatory tyrosine residues. Phosphorylation at Tyr-409 is required for optimal activity. Phosphorylation at Tyr-520 inhibits kinase activity. Its function is as follows. Non-receptor tyrosine-protein kinase found in hematopoietic cells that transmits signals from cell surface receptors and plays an important role in the regulation of innate immune responses, including neutrophil, monocyte, macrophage and mast cell functions, phagocytosis, cell survival and proliferation, cell adhesion and migration. Acts downstream of receptors that bind the Fc region of immunoglobulins, such as FCGR1A and FCGR2A, but also CSF3R, PLAUR, the receptors for IFNG, IL2, IL6 and IL8, and integrins, such as ITGB1 and ITGB2. During the phagocytic process, mediates mobilization of secretory lysosomes, degranulation, and activation of NADPH oxidase to bring about the respiratory burst. Plays a role in the release of inflammatory molecules. Promotes reorganization of the actin cytoskeleton and actin polymerization, formation of podosomes and cell protrusions. Inhibits TP73-mediated transcription activation and TP73-mediated apoptosis. Phosphorylates CBL in response to activation of immunoglobulin gamma Fc region receptors. Phosphorylates ADAM15, BCR, ELMO1, FCGR2A, GAB1, GAB2, RAPGEF1, STAT5B, TP73, VAV1 and WAS. The polypeptide is Tyrosine-protein kinase HCK (Hck) (Rattus norvegicus (Rat)).